Here is a 230-residue protein sequence, read N- to C-terminus: Transcriptional regulatory protein CitT (230 aa).

The Response regulatory domain occupies 6-124 (KVLIIEDDFR…VLHQRLDAYV (119 aa)). A 4-aspartylphosphate modification is found at Asp59. The H-T-H motif DNA-binding region spans 184–203 (AMEGARLIGASRSTVRRYFE).

Post-translationally, phosphorylated by CitS.

It is found in the cytoplasm. Its function is as follows. Member of the two-component regulatory system CitT/CitS. This Halalkalibacterium halodurans (strain ATCC BAA-125 / DSM 18197 / FERM 7344 / JCM 9153 / C-125) (Bacillus halodurans) protein is Transcriptional regulatory protein CitT (citT).